We begin with the raw amino-acid sequence, 613 residues long: Laccase 1 (613 aa).

A signal peptide spans 1 to 20 (MSRFARLLLIVALFFTGAWA). 2 Plastocyanin-like domains span residues 29–142 (ITWK…IRPK) and 171–359 (YLVV…MRIP). A glycan (N-linked (GlcNAc...) asparagine) is linked at Asn74. Residues His78, His80, His122, and His124 each coordinate Cu cation. Residues Asn256, Asn279, Asn444, Asn468, and Asn484 are each glycosylated (N-linked (GlcNAc...) asparagine). One can recognise a Plastocyanin-like 3 domain in the interval 468-598 (NATRDTENDG…GGMGIAILDG (131 aa)). Residues His506, His509, and His511 each coordinate Cu cation. N-linked (GlcNAc...) asparagine glycosylation occurs at Asn526. The Cu cation site is built by His580, Cys581, His582, and His586.

Belongs to the multicopper oxidase family. Cu cation serves as cofactor.

The protein resides in the cell surface. Its pathway is pigment biosynthesis. Its function is as follows. Laccase; part of the Pks1 gene cluster that mediates the biosynthesis of an anthraquinone derivative pigment that contributes to conidial pigmentation that provides protection from UV radiation, heat and cold stress. The polyketide synthase Pks1 produces 1-acetyl-2,4,6,8-tetrahydroxy-9,10-anthraquinone though condensation of acetyl-CoA with malonyl-CoA. The dehydratase EthD and the laccase Mlac1 further convert the anthraquinone derivative into the final conidial pigment. The sequence is that of Laccase 1 from Metarhizium guizhouense (strain ARSEF 977).